The following is a 178-amino-acid chain: Caveolin-1 (178 aa).

Ser-2 bears the N-acetylserine mark. Ser-2 is subject to Phosphoserine. The tract at residues 2-94 (SGGKYVDSEG…WKASFTTFTV (93 aa)) is required for homooligomerization. At 2–104 (SGGKYVDSEG…TKYWFYRLLS (103 aa)) the chain is on the cytoplasmic side. The residue at position 5 (Lys-5) is an N6-acetyllysine; alternate. A Glycyl lysine isopeptide (Lys-Gly) (interchain with G-Cter in ubiquitin); alternate cross-link involves residue Lys-5. A Phosphotyrosine modification is found at Tyr-6. Residue Ser-9 is modified to Phosphoserine. Tyr-14 is subject to Phosphotyrosine; by ABL1. Residue Tyr-25 is modified to Phosphotyrosine. Residues Lys-26 and Lys-30 each participate in a glycyl lysine isopeptide (Lys-Gly) (interchain with G-Cter in ubiquitin) cross-link. At Ser-37 the chain carries Phosphoserine. Glycyl lysine isopeptide (Lys-Gly) (interchain with G-Cter in ubiquitin) cross-links involve residues Lys-39, Lys-47, and Lys-57. Residues 82 to 94 (DGIWKASFTTFTV) are interaction with CAVIN3. An intramembrane region (helical) is located at residues 105–125 (ALFGIPMALIWGIYFAILSFL). Residues 126 to 178 (HIWAVVPCIKSFLIEIQCISRVYSIYVHTVCDPLFEAVGKIFSNVRINLQKEI) lie on the Cytoplasmic side of the membrane. The interacts with SPRY1, SPRY2, SPRY3 and SPRY4 stretch occupies residues 131 to 142 (VPCIKSFLIEIQ). S-palmitoyl cysteine attachment occurs at residues Cys-133, Cys-143, and Cys-156. The segment at 149-160 (SIYVHTVCDPLF) is interacts with SPRY1, SPRY2, and SPRY4. An interacts with SPRY1, SPRY2, SPRY3 and SPRY4 region spans residues 167–178 (FSNVRINLQKEI).

Belongs to the caveolin family. Homooligomer. Interacts with GLIPR2. Interacts with NOSTRIN. Interacts with SNAP25 and STX1A. Interacts (via the N-terminus) with DPP4; the interaction is direct. Interacts with CTNNB1, CDH1 and JUP. Interacts with PACSIN2; this interaction induces membrane tubulation. Interacts with SLC7A9. Interacts with BMX and BTK. Interacts with TGFBR1. Interacts with CAVIN3 (via leucine-zipper domain) in a cholesterol-sensitive manner. Interacts with CAVIN1. Interacts with EHD2 in a cholesterol-dependent manner. Forms a ternary complex with UBXN6 and VCP; mediates CAV1 targeting to lysosomes for degradation. Interacts with ABCG1; this interaction regulates ABCG1-mediated cholesterol efflux. Interacts with NEU3; this interaction enhances NEU3 sialidase activity within caveola. Interacts (via C-terminus) with SPRY1, SPRY2 (via C-terminus), SPRY3, and SPRY4. Interacts with IGFBP5; this interaction allows trafficking of IGFBP5 from the plasma membrane to the nucleus. Post-translationally, phosphorylated at Tyr-14 by ABL1 in response to oxidative stress. Ubiquitinated. Undergo monoubiquitination and multi- and/or polyubiquitination. Monoubiquitination of N-terminal lysines promotes integration in a ternary complex with UBXN6 and VCP which promotes oligomeric CAV1 targeting to lysosomes for degradation. Ubiquitinated by ZNRF1; leading to degradation and modulation of the TLR4-mediated immune response.

The protein resides in the golgi apparatus membrane. It is found in the cell membrane. Its subcellular location is the membrane. The protein localises to the caveola. It localises to the membrane raft. In terms of biological role, may act as a scaffolding protein within caveolar membranes. Forms a stable heterooligomeric complex with CAV2 that targets to lipid rafts and drives caveolae formation. Mediates the recruitment of CAVIN proteins (CAVIN1/2/3/4) to the caveolae. Interacts directly with G-protein alpha subunits and can functionally regulate their activity. Involved in the costimulatory signal essential for T-cell receptor (TCR)-mediated T-cell activation. Its binding to DPP4 induces T-cell proliferation and NF-kappa-B activation in a T-cell receptor/CD3-dependent manner. Recruits CTNNB1 to caveolar membranes and may regulate CTNNB1-mediated signaling through the Wnt pathway. Negatively regulates TGFB1-mediated activation of SMAD2/3 by mediating the internalization of TGFBR1 from membrane rafts leading to its subsequent degradation. Binds 20(S)-hydroxycholesterol (20(S)-OHC). The polypeptide is Caveolin-1 (CAV1) (Pongo abelii (Sumatran orangutan)).